Consider the following 444-residue polypeptide: MLEGLSESLTQTMKKLAGMSIIDKKTLKDVTKDIQRALIQSDVNVKVVFGLTKKIEKRALEEELPKGLSPKEHVMRIVYQELVNLIGEKPEELKINRKPYKIMMLGLQGSGKTTTTAKLVKHLKKKGHTSAIVCTDTWRPAAYEQLRQLTEPLDVPVFGDPENKDAIDLAKKGLEKCGSKYDVILVDTAGRHKEEKDLLDEMAELSQIVQPDEVILVIDGTIGQQARSQAETFKKTTDIGSIIVSKLDGSAKGGGALSAVAEIRAPIKFIGTGERVDDFEAFDPERFISRLLGMGDLDTLIEKAAEVTSEKSDKEMIDSIISGKFTLKDMENQLEMMNKMGPIQQIMKLIPGLGNQLPANASKVTEEKLGMYKILMNSMTTYELENPEVIKKSRINRISRGAGLTNDDVKDLLKYYNVTKKALKGMGKRNMSGPMGKLMRHMQR.

Residues 106–113 (GLQGSGKT), 187–191 (DTAGR), and 245–248 (SKLD) contribute to the GTP site.

This sequence belongs to the GTP-binding SRP family. SRP54 subfamily. As to quaternary structure, part of the signal recognition particle protein translocation system, which is composed of SRP and FtsY. Archaeal SRP consists of a 7S RNA molecule of 300 nucleotides and two protein subunits: SRP54 and SRP19.

It is found in the cytoplasm. It catalyses the reaction GTP + H2O = GDP + phosphate + H(+). Functionally, involved in targeting and insertion of nascent membrane proteins into the cytoplasmic membrane. Binds to the hydrophobic signal sequence of the ribosome-nascent chain (RNC) as it emerges from the ribosomes. The SRP-RNC complex is then targeted to the cytoplasmic membrane where it interacts with the SRP receptor FtsY. This is Signal recognition particle 54 kDa protein from Methanosphaera stadtmanae (strain ATCC 43021 / DSM 3091 / JCM 11832 / MCB-3).